A 515-amino-acid chain; its full sequence is Maturase K (515 aa).

The protein belongs to the intron maturase 2 family. MatK subfamily.

It localises to the plastid. Its subcellular location is the chloroplast. Its function is as follows. Usually encoded in the trnK tRNA gene intron. Probably assists in splicing its own and other chloroplast group II introns. The protein is Maturase K of Cedrus deodara (Deodar cedar).